Here is a 124-residue protein sequence, read N- to C-terminus: Apolipoprotein C-IV (124 aa).

The signal sequence occupies residues 1–27; the sequence is MSLLRCRQQTLPSLCLSVLFLACFVAS.

The protein belongs to the apolipoprotein C4 family.

The protein localises to the secreted. May participate in lipoprotein metabolism. This chain is Apolipoprotein C-IV (Apoc4), found in Rattus norvegicus (Rat).